Here is a 492-residue protein sequence, read N- to C-terminus: Spore germination protein XA (492 aa).

The next 7 helical transmembrane spans lie at 246 to 266 (FILL…FPFF), 285 to 305 (LLSL…VALV), 325 to 345 (EGIP…FELL), 353 to 373 (PAAF…QAAI), 377 to 397 (FVSP…FTLV), 413 to 433 (FLMS…LIVI), and 442 to 462 (GLPF…PSTF).

The protein belongs to the GerABKA family.

Its subcellular location is the cell membrane. Its function is as follows. May allow B.anthracis to germinate within phagocytic cells and therefore involved in virulence. In Bacillus anthracis, this protein is Spore germination protein XA (gerXA).